The following is a 111-amino-acid chain: Translation initiation factor 1A (111 aa).

The 73-residue stretch at 11 to 83 (KKIRLPKEGE…ERADVTWRYT (73 aa)) folds into the S1-like domain.

The protein belongs to the eIF-1A family.

Functionally, seems to be required for maximal rate of protein biosynthesis. Enhances ribosome dissociation into subunits and stabilizes the binding of the initiator Met-tRNA(I) to 40 S ribosomal subunits. The sequence is that of Translation initiation factor 1A (eIF1A) from Methanopyrus kandleri (strain AV19 / DSM 6324 / JCM 9639 / NBRC 100938).